The chain runs to 253 residues: uncharacterized protein (253 aa).

An NADP(+)-binding site is contributed by Leu10 to Phe34. Ser142 serves as a coordination point for substrate. The active-site Proton acceptor is the Tyr155.

This sequence belongs to the short-chain dehydrogenases/reductases (SDR) family.

This is an uncharacterized protein from Myxococcus xanthus (strain DK1622).